The following is a 142-amino-acid chain: UPF0306 protein Ent638_3591 (142 aa).

This sequence belongs to the UPF0306 family.

The sequence is that of UPF0306 protein Ent638_3591 from Enterobacter sp. (strain 638).